We begin with the raw amino-acid sequence, 21 residues long: M-lycotoxin-Ls4a (21 aa).

Leucine 21 carries the post-translational modification Leucine amide.

As to expression, expressed by the venom gland.

It is found in the secreted. In terms of biological role, may inhibit growth of bacteria. The protein is M-lycotoxin-Ls4a of Lycosa singoriensis (Wolf spider).